The sequence spans 227 residues: Probable methylthioribulose-1-phosphate dehydratase (227 aa).

Cysteine 87 lines the substrate pocket. Zn(2+)-binding residues include histidine 105 and histidine 107. Glutamate 129 functions as the Proton donor/acceptor in the catalytic mechanism. Histidine 185 provides a ligand contact to Zn(2+).

This sequence belongs to the aldolase class II family. MtnB subfamily. The cofactor is Zn(2+).

Its subcellular location is the cytoplasm. The catalysed reaction is 5-(methylsulfanyl)-D-ribulose 1-phosphate = 5-methylsulfanyl-2,3-dioxopentyl phosphate + H2O. Its pathway is amino-acid biosynthesis; L-methionine biosynthesis via salvage pathway; L-methionine from S-methyl-5-thio-alpha-D-ribose 1-phosphate: step 2/6. Its function is as follows. Catalyzes the dehydration of methylthioribulose-1-phosphate (MTRu-1-P) into 2,3-diketo-5-methylthiopentyl-1-phosphate (DK-MTP-1-P). This Drosophila ananassae (Fruit fly) protein is Probable methylthioribulose-1-phosphate dehydratase.